The sequence spans 69 residues: Large ribosomal subunit protein bL31 (69 aa).

Residues cysteine 16, cysteine 18, cysteine 38, and cysteine 41 each contribute to the Zn(2+) site.

The protein belongs to the bacterial ribosomal protein bL31 family. Type A subfamily. In terms of assembly, part of the 50S ribosomal subunit. The cofactor is Zn(2+).

Functionally, binds the 23S rRNA. The polypeptide is Large ribosomal subunit protein bL31 (Cutibacterium acnes (strain DSM 16379 / KPA171202) (Propionibacterium acnes)).